The sequence spans 716 residues: Amino-acid acetyltransferase, mitochondrial (716 aa).

The N-terminal 44 residues, 1 to 44, are a transit peptide targeting the mitochondrion; sequence MSPHTGWPRTVNSSLLKKHRSSLCTCQHTSSFLPRSFSTTADRH. 2 disordered regions span residues 99-119 and 487-508; these read YPKSPDENKPEPEKLATAPTL and LSSSLPMSRRGPTNNGQGTVYP. Residues 102 to 112 are compositionally biased toward basic and acidic residues; the sequence is SPDENKPEPEK. Residues 497–508 show a composition bias toward polar residues; that stretch reads GPTNNGQGTVYP. The 170-residue stretch at 537-706 folds into the N-acetyltransferase domain; it reads SRPRLKLDDP…YEAVCRSTQP (170 aa).

The protein belongs to the acetyltransferase family.

The protein localises to the mitochondrion. The catalysed reaction is L-glutamate + acetyl-CoA = N-acetyl-L-glutamate + CoA + H(+). The protein operates within amino-acid biosynthesis; L-arginine biosynthesis; N(2)-acetyl-L-ornithine from L-glutamate: step 1/4. Its function is as follows. N-acetylglutamate synthase involved in arginine biosynthesis. This is Amino-acid acetyltransferase, mitochondrial (arg2) from Neosartorya fischeri (strain ATCC 1020 / DSM 3700 / CBS 544.65 / FGSC A1164 / JCM 1740 / NRRL 181 / WB 181) (Aspergillus fischerianus).